The primary structure comprises 89 residues: Envelope glycoprotein N (89 aa).

The signal sequence occupies residues 1 to 24 (MAPGRGVLLLICLCLMDNVSQVVC). At 25–56 (SQNSTTPSKFPTFYSYDCNADTYAPQLTSFST) the chain is on the virion surface side. A helical membrane pass occupies residues 57–77 (IWTLLNVLVMTIACVIYLIYM). At 78–89 (CFNKFVATMTNT) the chain is on the intravirion side.

Belongs to the herpesviridae glycoprotein N family. Interacts (via N-terminus) with gM (via N-terminus). The gM-gN heterodimer forms the gCII complex.

Its subcellular location is the virion membrane. The protein resides in the host membrane. It localises to the host Golgi apparatus. The protein localises to the host trans-Golgi network. Its function is as follows. Envelope glycoprotein necessary for proper maturation of gM and modulation of its membrane fusion activity. Also plays a critical role in virion morphogenesis. This chain is Envelope glycoprotein N, found in Equine herpesvirus 2 (strain 86/87) (EHV-2).